A 1715-amino-acid polypeptide reads, in one-letter code: Neurexin-2 (1715 aa).

The first 29 residues, 1 to 29, serve as a signal peptide directing secretion; it reads MALGSRWRPPPQLPPLLLLLALVAGVRGL. A Laminin G-like 1 domain is found at 30-206; it reads EFGGGPGQWA…LRGAAADPLC (177 aa). The Extracellular segment spans residues 30-1639; the sequence is EFGGGPGQWA…EVIRESSSTT (1610 aa). N-linked (GlcNAc...) asparagine glycosylation occurs at N60. Residues 202 to 242 form the EGF-like 1 domain; sequence ADPLCAPARNPCANGGLCTVLAPGEVGCDCSHTGFGGKFCS. 3 cysteine pairs are disulfide-bonded: C206-C219, C213-C229, and C231-C241. Laminin G-like domains lie at 289-486 and 493-686; these read VATF…SFRC and DPVT…APFC. D335 contributes to the Ca(2+) binding site. The N-linked (GlcNAc...) asparagine glycan is linked to N338. Residues L352 and M420 each contribute to the Ca(2+) site. Disulfide bonds link C450/C486, C657/C686, C694/C705, C699/C714, and C716/C726. In terms of domain architecture, EGF-like 2 spans 690 to 727; it reads TLKQCASAPCRNGGICREGWNRFVCDCIGTGFLGRVCE. Laminin G-like domains are found at residues 732 to 907 and 921 to 1096; these read VLSY…ITYC and DPVT…ERGC. Residues D779 and L796 each coordinate Ca(2+). N844 carries an N-linked (GlcNAc...) asparagine glycan. R857 lines the Ca(2+) pocket. Intrachain disulfides connect C1068–C1096, C1103–C1114, C1108–C1123, and C1125–C1135. The 38-residue stretch at 1099–1136 folds into the EGF-like 3 domain; the sequence is PSTTCTEESCANQGVCLQQWDGFTCDCTMTSYGGPVCN. Residues 1140–1348 form the Laminin G-like 6 domain; it reads TTYIFGKGGA…HLRLVGEGPS (209 aa). 2 residues coordinate Ca(2+): D1192 and V1209. N-linked (GlcNAc...) asparagine glycosylation is present at N1239. Residues I1291 and N1293 each contribute to the Ca(2+) site. O-linked (Xyl...) (heparan sulfate) serine glycosylation occurs at S1403. Disordered regions lie at residues 1461 to 1511, 1529 to 1549, and 1583 to 1626; these read ATQD…LPPT, LLSPRKPAPRPNLRTDGATGA, and LGPG…RGPP. A helical transmembrane segment spans residues 1640–1660; sequence GMVVGIVAAAALCILILLYAM. Topologically, residues 1661-1715 are cytoplasmic; that stretch reads YKYRNRDEGSYQVDQSRNYISNSAQSNGAVVKEKAPAAPKTPSKAKKNKDKEYYV. A disordered region spans residues 1682–1715; sequence NSAQSNGAVVKEKAPAAPKTPSKAKKNKDKEYYV.

Belongs to the neurexin family. In terms of assembly, the laminin G-like domain 1 binds to NXPH1. Interacts with PATJ. Interacts with CBLN1, CBLN2 and, less avidly, with CBLN4. Specific isoforms bind neuroligins NLGN1, NLGN2 and NLGN3. Isoform 5c/alpha-2C binds to alpha-dystroglycan. Interacts (via Laminin G-like 1 domain) with IGSF21 (Ig-like 1 domain) in a trans-interaction manner. Interacts with CLSTN3. Post-translationally, O-glycosylated; contains heparan sulfate. Heparan sulfate attachment is required for synapse development by mediating interactions with neuroligins. Brain (neuronal synapse).

It is found in the presynaptic cell membrane. Its function is as follows. Neuronal cell surface protein that may be involved in cell recognition and cell adhesion. May mediate intracellular signaling. The chain is Neurexin-2 (Nrxn2) from Rattus norvegicus (Rat).